The chain runs to 303 residues: Glycine--tRNA ligase alpha subunit (303 aa).

Belongs to the class-II aminoacyl-tRNA synthetase family. As to quaternary structure, tetramer of two alpha and two beta subunits.

The protein resides in the cytoplasm. It carries out the reaction tRNA(Gly) + glycine + ATP = glycyl-tRNA(Gly) + AMP + diphosphate. This Stenotrophomonas maltophilia (strain R551-3) protein is Glycine--tRNA ligase alpha subunit.